Reading from the N-terminus, the 320-residue chain is Olfactory receptor 12D1 (320 aa).

The Extracellular segment spans residues 1-23 (MLNTTSVTEFLLLGVTDIQELQP). A glycan (N-linked (GlcNAc...) asparagine) is linked at Asn-3. A helical transmembrane segment spans residues 24 to 44 (FLFVVFLTIYFISVAGNGAIL). Topologically, residues 45–55 (MIVISDPRLHS) are cytoplasmic. The helical transmembrane segment at 56–76 (PMYFFLGNLSCLDICYSSVTL) threads the bilayer. The Extracellular segment spans residues 77 to 97 (PKMLQNFLSAHKAISFLGCIS). A disulfide bridge connects residues Cys-95 and Cys-177. Residues 98–118 (QLHFFHFLGSTEAMLLAVMAF) traverse the membrane as a helical segment. At 119–141 (DRFVAICKPLRYTVIMNPQLCTQ) the chain is on the cytoplasmic side. The helical transmembrane segment at 142-162 (MAITIWMIGFFHALLHSLMTS) threads the bilayer. Topologically, residues 163–203 (RLNFCGSNRIYHFFCDVKPLLKLACGNTELNQWLLSTVTGT) are extracellular. A helical transmembrane segment spans residues 204 to 224 (IAMGPFFLTLLSYFYIITHLF). Residues 225–238 (FKTHSFSMLRKALS) lie on the Cytoplasmic side of the membrane. The helical transmembrane segment at 239 to 259 (TCASHFMVVILLYAPVLFTYI) threads the bilayer. Over 260–270 (HHASGTSMDQD) the chain is Extracellular. A helical transmembrane segment spans residues 271 to 291 (RITAIMYTVVTPVLNPLIYTL). Residues 292–320 (RNKEVKGAFNRAMKRWLWPKEILKNSSEA) lie on the Cytoplasmic side of the membrane.

It belongs to the G-protein coupled receptor 1 family.

Its subcellular location is the cell membrane. Odorant receptor. The chain is Olfactory receptor 12D1 (OR12D1) from Homo sapiens (Human).